Here is a 561-residue protein sequence, read N- to C-terminus: Dihydroxy-acid dehydratase (561 aa).

C50 serves as a coordination point for [2Fe-2S] cluster. Position 82 (D82) interacts with Mg(2+). C123 contributes to the [2Fe-2S] cluster binding site. Mg(2+)-binding residues include D124 and K125. K125 is modified (N6-carboxylysine). C195 serves as a coordination point for [2Fe-2S] cluster. A Mg(2+)-binding site is contributed by E447. S473 serves as the catalytic Proton acceptor.

Belongs to the IlvD/Edd family. In terms of assembly, homodimer. Requires [2Fe-2S] cluster as cofactor. It depends on Mg(2+) as a cofactor.

The enzyme catalyses (2R)-2,3-dihydroxy-3-methylbutanoate = 3-methyl-2-oxobutanoate + H2O. It carries out the reaction (2R,3R)-2,3-dihydroxy-3-methylpentanoate = (S)-3-methyl-2-oxopentanoate + H2O. Its pathway is amino-acid biosynthesis; L-isoleucine biosynthesis; L-isoleucine from 2-oxobutanoate: step 3/4. It functions in the pathway amino-acid biosynthesis; L-valine biosynthesis; L-valine from pyruvate: step 3/4. Its function is as follows. Functions in the biosynthesis of branched-chain amino acids. Catalyzes the dehydration of (2R,3R)-2,3-dihydroxy-3-methylpentanoate (2,3-dihydroxy-3-methylvalerate) into 2-oxo-3-methylpentanoate (2-oxo-3-methylvalerate) and of (2R)-2,3-dihydroxy-3-methylbutanoate (2,3-dihydroxyisovalerate) into 2-oxo-3-methylbutanoate (2-oxoisovalerate), the penultimate precursor to L-isoleucine and L-valine, respectively. In Trichodesmium erythraeum (strain IMS101), this protein is Dihydroxy-acid dehydratase.